Reading from the N-terminus, the 563-residue chain is Lengsin (563 aa).

The interval 1-115 (MTDEGDLAQE…PNTDPTRYNA (115 aa)) is disordered. A compositionally biased stretch (basic residues) spans 26-37 (SKLRRARRKVTK). Polar residues-rich tracts occupy residues 51 to 62 (ANSSEMSRNQIA) and 105 to 115 (SPNTDPTRYNA). The GS beta-grasp domain maps to 137 to 231 (NHLQFVRFEA…VICDTFTVTG (95 aa)). Residues 238 to 563 (PRYIAKRQLR…EGNKFLEYFI (326 aa)) form the GS catalytic domain.

The protein belongs to the glutamine synthetase family. As to quaternary structure, dodecamer. Interacts with BFSP2 and VIM. As to expression, expressed in lens.

In terms of biological role, may act as a component of the cytoskeleton or as a chaperone for the reorganization of intermediate filament proteins during terminal differentiation in the lens. Does not seem to have enzymatic activity. This Mus musculus (Mouse) protein is Lengsin (Lgsn).